A 174-amino-acid polypeptide reads, in one-letter code: ATP synthase subunit d, mitochondrial (174 aa).

Serine 2 is modified (N-acetylserine).

It belongs to the ATPase d subunit family.

It localises to the mitochondrion inner membrane. In terms of biological role, mitochondrial membrane ATP synthase (F(1)F(0) ATP synthase or Complex V) produces ATP from ADP in the presence of a proton gradient across the membrane which is generated by electron transport complexes of the respiratory chain. F-type ATPases consist of two structural domains, F(1) - containing the extramembraneous catalytic core, and F(0) - containing the membrane proton channel, linked together by a central stalk and a peripheral stalk. During catalysis, ATP synthesis in the catalytic domain of F(1) is coupled via a rotary mechanism of the central stalk subunits to proton translocation. Part of the complex F(0) domain and the peripheric stalk, which acts as a stator to hold the catalytic alpha(3)beta(3) subcomplex and subunit a/ATP6 static relative to the rotary elements. This is ATP synthase subunit d, mitochondrial (ATP7) from Kluyveromyces lactis (strain ATCC 8585 / CBS 2359 / DSM 70799 / NBRC 1267 / NRRL Y-1140 / WM37) (Yeast).